Reading from the N-terminus, the 125-residue chain is uncharacterized protein (125 aa).

An N-terminal signal peptide occupies residues 1-21; that stretch reads MIRNIIITISAILLLTSKGFA. Positions 54–102 form a coiled coil; sequence KPEIREEIQKYRVEIVNINKKKRELYDKLSKEAQNFLAKEQEYKQRLSS. A disordered region spans residues 96 to 125; that stretch reads YKQRLSSSSMATEDSKDNNTAKDNKDADKK. Basic and acidic residues predominate over residues 108–125; sequence EDSKDNNTAKDNKDADKK.

This is an uncharacterized protein from Rickettsia bellii (strain RML369-C).